Here is a 130-residue protein sequence, read N- to C-terminus: 3-aminoacrylate deaminase RutC (130 aa).

Belongs to the RutC family.

It carries out the reaction (Z)-3-aminoacrylate + H2O + H(+) = 3-oxopropanoate + NH4(+). Functionally, involved in pyrimidine catabolism. Catalyzes the deamination of 3-aminoacrylate to malonic semialdehyde, a reaction that can also occur spontaneously. RutC may facilitate the reaction and modulate the metabolic fitness, rather than catalyzing essential functions. The sequence is that of 3-aminoacrylate deaminase RutC from Klebsiella pneumoniae (strain 342).